The sequence spans 210 residues: Chloramphenicol acetyltransferase (210 aa).

His-79 is an active-site residue.

It belongs to the transferase hexapeptide repeat family.

The catalysed reaction is chloramphenicol + acetyl-CoA = chloramphenicol 3-acetate + CoA. This enzyme is an effector of chloramphenicol resistance in bacteria. This chain is Chloramphenicol acetyltransferase (catB2), found in Escherichia coli.